A 157-amino-acid polypeptide reads, in one-letter code: Small ribosomal subunit protein uS7 (157 aa).

The protein belongs to the universal ribosomal protein uS7 family. As to quaternary structure, part of the 30S ribosomal subunit. Contacts proteins S9 and S11.

In terms of biological role, one of the primary rRNA binding proteins, it binds directly to 16S rRNA where it nucleates assembly of the head domain of the 30S subunit. Is located at the subunit interface close to the decoding center, probably blocks exit of the E-site tRNA. This chain is Small ribosomal subunit protein uS7, found in Variovorax paradoxus (strain S110).